The sequence spans 482 residues: Cis-aconitate decarboxylase-like protein oryM (482 aa).

The protein belongs to the PrpD family.

It participates in secondary metabolite biosynthesis. Functionally, cis-aconitate decarboxylase-like protein; part of the gene cluster that mediates the biosynthesis of oryzines, natural products with an unusual maleidride backbone. The two subunits of the fungal fatty acid synthase oryfasA and oryfasB probably form octenoic acid. This fatty acid is most likely activated by the acyl-CoA ligase oryP to give octenyl-CoA before the citrate synthase-like protein oryE catalyzes condensation with oxaloacetate to form tricarboxylic acid. The next steps of the pathways are conjectural, but a favorite possible route has been proposed, beginning with decarboxylation and concomitant dehydration by the decarboxylase oryM, followed by tautomerization, which may lead to the production of a diene intermediate. Reduction of this diene intermediate could give the known metabolite piliformic acid. On the pathway to oryzine B and oryzine A, however, hydroxylation of the diene by the alpha-ketoglutarate-dependent dioxygenase oryG and lactonisation by the lactonohydrolases oryH or oryL could give oryzine B directly. Finally, enoyl reduction by the dehydrogenase oryD would then convert oryzine B into oryzine A. The chain is Cis-aconitate decarboxylase-like protein oryM from Aspergillus oryzae (strain ATCC 42149 / RIB 40) (Yellow koji mold).